A 161-amino-acid chain; its full sequence is Nucleotide-binding protein Pcar_0033 (161 aa).

Belongs to the YajQ family.

In terms of biological role, nucleotide-binding protein. This chain is Nucleotide-binding protein Pcar_0033, found in Syntrophotalea carbinolica (strain DSM 2380 / NBRC 103641 / GraBd1) (Pelobacter carbinolicus).